The chain runs to 155 residues: RxLR effector protein 24 (155 aa).

Positions 1 to 21 are cleaved as a signal peptide; sequence MRLLIWVLFVTLVTFVSNTTA. Positions 52–78 match the RxLR-dEER motif; it reads RFLRTESKNDLKSDADTNGIDIEDEER. An RABA-binding domain region spans residues 105–155; the sequence is EKAFQRMNQKGETPTTLAKRLDIGKTAEKRFEKTYEKYTAWWINHHTNAGT.

The protein belongs to the RxLR effector family. In terms of assembly, interacts with Arabidopsis thaliana RABA GTPases including RABA1a, RABA1b, RABA1c, RABA1d, RABA1f, RABA2a, RABA2c, RABA2d, RABA4a, RABA4b and RABA4c.

It localises to the secreted. It is found in the host cell membrane. The protein localises to the host endomembrane system. In terms of biological role, effector protein that contributes to pathogen virulence. Targets members of the RABA GTPases subfamily to inhibit vesicular secretion, leading to an accumulation of secretory proteins in the endoplasmic reticulum. The sequence is that of RxLR effector protein 24 from Phytophthora brassicae.